The chain runs to 1426 residues: ABC transporter G family member 31 (1426 aa).

Residues 142–415 (LRHLRIYRGG…FAGMGFRCPE (274 aa)) form the ABC transporter 1 domain. 175–182 (GPPSSGKT) contacts ATP. One can recognise an ABC transmembrane type-2 1 domain in the interval 493 to 706 (ELLKSNFQWQ…AQNAISVNEF (214 aa)). The next 7 membrane-spanning stretches (helical) occupy residues 511 to 531 (FIYV…MTVF), 544 to 564 (GIIY…NGFT), 592 to 612 (LPSW…WVLV), 630 to 650 (FLLL…MASL), 655 to 675 (IVAN…GGFI), 681 to 701 (IPAW…QNAI), and 741 to 761 (IGVG…TLFL). In terms of domain architecture, ABC transporter 2 spans 824–1076 (MCFKNINYYV…NLVEFFEAIP (253 aa)). 869–876 (GVSGAGKT) is a binding site for ATP. The region spanning 1149 to 1363 (AQYAACLWKQ…TLYGLLTSQF (215 aa)) is the ABC transmembrane type-2 2 domain. 7 helical membrane passes run 1168-1188 (YTAV…TICW), 1200-1220 (IFNA…TNAT), 1245-1265 (LPFA…QSLI), 1283-1303 (FLWY…YGMM), 1313-1333 (VAPI…GFMI), 1341-1363 (WWRW…TSQF), and 1398-1418 (VVAG…ALAI).

It belongs to the ABC transporter superfamily. ABCG family. PDR (TC 3.A.1.205) subfamily.

It is found in the membrane. Functionally, may be a general defense protein. The chain is ABC transporter G family member 31 from Oryza sativa subsp. japonica (Rice).